The following is a 748-amino-acid chain: Proton-associated sugar transporter A (748 aa).

6 helical membrane-spanning segments follow: residues 93–113 (ILFG…PVLL), 123–143 (SLVW…LGAW), 155–175 (RPFI…LLNG), 191–211 (WGLL…DSAD), 233–253 (IHAL…GIHW), and 268–288 (VIYL…LVSI). The tract at residues 294 to 339 (RPPSEKRAAMKSPSLPLPPSPPVLPEEGPGDSLPSHTATNFSSPIS) is disordered. Over residues 308–317 (LPLPPSPPVL) the composition is skewed to pro residues. Residue Thr497 is modified to Phosphothreonine. 6 helical membrane passes run 533–553 (GWLS…EVVF), 573–593 (VTMG…YSAI), 600–620 (FLSV…GTGL), 627–647 (LYVV…LCTL), 685–705 (FLAQ…VGSA), and 708–728 (VMYF…LFVI).

This sequence belongs to the glycoside-pentoside-hexuronide (GPH) cation symporter transporter (TC 2.A.2) family. In terms of tissue distribution, expressed in adult heart, brain, muscle and kidney, with very strong expression in brain. Also expressed in fetal brain, kidney and lung.

The protein resides in the membrane. It catalyses the reaction D-galactose(in) + H(+)(in) = D-galactose(out) + H(+)(out). It carries out the reaction D-glucose(out) + H(+)(out) = D-glucose(in) + H(+)(in). Its function is as follows. Proton-associated glucose transporter in the brain. In Homo sapiens (Human), this protein is Proton-associated sugar transporter A.